Reading from the N-terminus, the 168-residue chain is uncharacterized protein (168 aa).

Disordered regions lie at residues 1 to 35, 48 to 97, and 126 to 168; these read MGSS…KKLD, KVKK…DKGN, and ASIT…GLGM. Positions 29 to 95 form a coiled coil; sequence KEKKKLDEKE…KNSLSRSQDK (67 aa). The segment covering 68-85 has biased composition (basic and acidic residues); the sequence is LAEDPMVKNVAENDHDQM. Residues 126–139 are compositionally biased toward polar residues; it reads ASITESSPSAQSNK. Residues 140–150 show a composition bias toward basic and acidic residues; the sequence is TNDKQREKELE. The segment covering 157-168 has biased composition (basic residues); the sequence is VLHKGTKKGLGM.

This is an uncharacterized protein from Schizosaccharomyces pombe (strain 972 / ATCC 24843) (Fission yeast).